We begin with the raw amino-acid sequence, 440 residues long: Chromosomal replication initiator protein DnaA (440 aa).

A domain I, interacts with DnaA modulators region spans residues 1 to 69 (MKERILQEIK…VKVVLGNDAT (69 aa)). The segment at 69 to 96 (TFEITYEAFEPHSSYSEPLVKKRAVLLT) is domain II. The domain III, AAA+ region stretch occupies residues 97 to 313 (PLNPDYTFEN…GAIIKLLVYK (217 aa)). Residues G140, G142, K143, and T144 each coordinate ATP. Residues 314 to 440 (ETTGKEVDLK…GEISRRALSG (127 aa)) are domain IV, binds dsDNA.

Belongs to the DnaA family. In terms of assembly, oligomerizes as a right-handed, spiral filament on DNA at oriC.

It is found in the cytoplasm. Its function is as follows. Plays an essential role in the initiation and regulation of chromosomal replication. ATP-DnaA binds to the origin of replication (oriC) to initiate formation of the DNA replication initiation complex once per cell cycle. Binds the DnaA box (a 9 base pair repeat at the origin) and separates the double-stranded (ds)DNA. Forms a right-handed helical filament on oriC DNA; dsDNA binds to the exterior of the filament while single-stranded (ss)DNA is stabiized in the filament's interior. The ATP-DnaA-oriC complex binds and stabilizes one strand of the AT-rich DNA unwinding element (DUE), permitting loading of DNA polymerase. After initiation quickly degrades to an ADP-DnaA complex that is not apt for DNA replication. Binds acidic phospholipids. The sequence is that of Chromosomal replication initiator protein DnaA from Thermotoga sp. (strain RQ2).